We begin with the raw amino-acid sequence, 241 residues long: MIDLTGKTSLITGASGGIGGAIARLLHKLGSHVIISGSNEEKLQSLGKVVKDNYTIEVCNLADKEECRNLISKASKLDILVCNAGITSDTLAIRMKDEDFDKVIDINLKANFILNREAIKKMIQNRYGRIINISSIVGISGNPGQANYCASKAGLIGMTKSLSYEVATRGITVNTVAPGFIKSDMTDKLNEKQREAIVQKIPLGTYGMPEDVAHAVAFLASDQASYITGQTIHVNGGMLMV.

NADP(+)-binding positions include 13-16 (GASG), S38, 57-58 (EV), and N83. Residue S135 participates in substrate binding. Y148 (proton acceptor) is an active-site residue. NADP(+) is bound by residues 148–152 (YCASK) and I181.

Belongs to the short-chain dehydrogenases/reductases (SDR) family. Homotetramer.

The catalysed reaction is a (3R)-hydroxyacyl-[ACP] + NADP(+) = a 3-oxoacyl-[ACP] + NADPH + H(+). The protein operates within lipid metabolism; fatty acid biosynthesis. In terms of biological role, catalyzes the NADPH-dependent reduction of beta-ketoacyl-ACP substrates to beta-hydroxyacyl-ACP products, the first reductive step in the elongation cycle of fatty acid biosynthesis. The polypeptide is 3-oxoacyl-[acyl-carrier-protein] reductase FabG (fabG) (Rickettsia conorii (strain ATCC VR-613 / Malish 7)).